Consider the following 324-residue polypeptide: MTKNNNDLSNSSSNPPSNRPVAGKEAELEIQRETHAAQSGQSESWLSRPIPTVKRNSLPQLTAVETEPSTECPQCHSMITNTALIFNAYVCPHCDHHLAMTARERLTGFLDHIEAELGQEFSASDPLKFVDSKPYPQRMEQMQTKTGETEALIVLQGKLRDMDVVACAFDFRFMGGSMGSVVGDRFVQAAEVALTNKAPLICFAASGGARMQEGVLSLMQMARTSAAIERLRLAGIPYIVVLTNPVYGGVTASLAMLGDIHIAEPKAMIGFAGKRVIEQTVRETLEEPFQRAEYLLEHGVIDQVVHRHQMNDTVYRLLAKLTHV.

The span at 1-16 (MTKNNNDLSNSSSNPP) shows a compositional bias: low complexity. Residues 1 to 51 (MTKNNNDLSNSSSNPPSNRPVAGKEAELEIQRETHAAQSGQSESWLSRPIP) form a disordered region. The segment covering 22–35 (AGKEAELEIQRETH) has biased composition (basic and acidic residues). A compositionally biased stretch (polar residues) spans 36–45 (AAQSGQSESW). The CoA carboxyltransferase N-terminal domain maps to 68–324 (PSTECPQCHS…YRLLAKLTHV (257 aa)). Zn(2+) is bound by residues Cys72, Cys75, Cys91, and Cys94. The segment at 72-94 (CPQCHSMITNTALIFNAYVCPHC) adopts a C4-type zinc-finger fold.

Belongs to the AccD/PCCB family. As to quaternary structure, acetyl-CoA carboxylase is a heterohexamer composed of biotin carboxyl carrier protein (AccB), biotin carboxylase (AccC) and two subunits each of ACCase subunit alpha (AccA) and ACCase subunit beta (AccD). Requires Zn(2+) as cofactor.

Its subcellular location is the cytoplasm. It carries out the reaction N(6)-carboxybiotinyl-L-lysyl-[protein] + acetyl-CoA = N(6)-biotinyl-L-lysyl-[protein] + malonyl-CoA. It participates in lipid metabolism; malonyl-CoA biosynthesis; malonyl-CoA from acetyl-CoA: step 1/1. Its function is as follows. Component of the acetyl coenzyme A carboxylase (ACC) complex. Biotin carboxylase (BC) catalyzes the carboxylation of biotin on its carrier protein (BCCP) and then the CO(2) group is transferred by the transcarboxylase to acetyl-CoA to form malonyl-CoA. The protein is Acetyl-coenzyme A carboxylase carboxyl transferase subunit beta of Psychrobacter sp. (strain PRwf-1).